Reading from the N-terminus, the 380-residue chain is 1-deoxy-D-xylulose 5-phosphate reductoisomerase (380 aa).

NADPH is bound by residues serine 10, glycine 11, serine 12, isoleucine 13, glycine 36, lysine 37, asparagine 38, and asparagine 120. Lysine 121 serves as a coordination point for 1-deoxy-D-xylulose 5-phosphate. Residue glutamate 122 coordinates NADPH. Mn(2+) is bound at residue aspartate 146. Positions 147, 148, 172, and 195 each coordinate 1-deoxy-D-xylulose 5-phosphate. Glutamate 148 serves as a coordination point for Mn(2+). Residue glycine 201 participates in NADPH binding. Residues serine 208, asparagine 213, lysine 214, and glutamate 217 each coordinate 1-deoxy-D-xylulose 5-phosphate. Glutamate 217 provides a ligand contact to Mn(2+).

It belongs to the DXR family. Mg(2+) is required as a cofactor. The cofactor is Mn(2+).

It carries out the reaction 2-C-methyl-D-erythritol 4-phosphate + NADP(+) = 1-deoxy-D-xylulose 5-phosphate + NADPH + H(+). It functions in the pathway isoprenoid biosynthesis; isopentenyl diphosphate biosynthesis via DXP pathway; isopentenyl diphosphate from 1-deoxy-D-xylulose 5-phosphate: step 1/6. Its function is as follows. Catalyzes the NADPH-dependent rearrangement and reduction of 1-deoxy-D-xylulose-5-phosphate (DXP) to 2-C-methyl-D-erythritol 4-phosphate (MEP). The polypeptide is 1-deoxy-D-xylulose 5-phosphate reductoisomerase (Bacillus cereus (strain AH187)).